Reading from the N-terminus, the 501-residue chain is Proline--tRNA ligase (501 aa).

Belongs to the class-II aminoacyl-tRNA synthetase family. ProS type 3 subfamily. In terms of assembly, homodimer.

It localises to the cytoplasm. The enzyme catalyses tRNA(Pro) + L-proline + ATP = L-prolyl-tRNA(Pro) + AMP + diphosphate. Its function is as follows. Catalyzes the attachment of proline to tRNA(Pro) in a two-step reaction: proline is first activated by ATP to form Pro-AMP and then transferred to the acceptor end of tRNA(Pro). The polypeptide is Proline--tRNA ligase (Halobacterium salinarum (strain ATCC 29341 / DSM 671 / R1)).